The sequence spans 379 residues: Galactose-1-phosphate uridylyltransferase (379 aa).

The segment covering 1 to 15 (MSQSGADPEQRQQAS) has biased composition (polar residues). The segment at 1 to 20 (MSQSGADPEQRQQASEADAM) is disordered. Residue cysteine 75 coordinates Zn(2+). UDP-alpha-D-glucose-binding positions include alanine 81, 97 to 98 (ND), and asparagine 173. Zn(2+) is bound at residue histidine 184. Histidine 186 serves as the catalytic Tele-UMP-histidine intermediate. Glutamine 188 contacts UDP-alpha-D-glucose. Zn(2+) is bound by residues glutamate 202, histidine 301, histidine 319, and histidine 321. UDP-alpha-D-glucose is bound by residues 334 to 337 (KFMV) and 339 to 340 (YE).

The protein belongs to the galactose-1-phosphate uridylyltransferase type 1 family. As to quaternary structure, homodimer. Requires Zn(2+) as cofactor.

The enzyme catalyses alpha-D-galactose 1-phosphate + UDP-alpha-D-glucose = alpha-D-glucose 1-phosphate + UDP-alpha-D-galactose. The protein operates within carbohydrate metabolism; galactose metabolism. Plays an important role in galactose metabolism. This Rattus norvegicus (Rat) protein is Galactose-1-phosphate uridylyltransferase (Galt).